A 140-amino-acid chain; its full sequence is Profilin (140 aa).

This sequence belongs to the profilin family. In terms of assembly, occurs in many kinds of cells as a complex with monomeric actin in a 1:1 ratio.

In terms of biological role, binds to actin and affects the structure of the cytoskeleton. At high concentrations, profilin prevents the polymerization of actin, whereas it enhances it at low concentrations. By binding to PIP2, it inhibits the formation of IP3 and DG. The protein is Profilin of Suberites domuncula (Sponge).